The chain runs to 265 residues: 2-C-methyl-D-erythritol 4-phosphate cytidylyltransferase (265 aa).

Over residues D231 to R241 the composition is skewed to basic and acidic residues. Positions D231–V265 are disordered. Low complexity predominate over residues S253–V265.

Belongs to the IspD/TarI cytidylyltransferase family. IspD subfamily.

It carries out the reaction 2-C-methyl-D-erythritol 4-phosphate + CTP + H(+) = 4-CDP-2-C-methyl-D-erythritol + diphosphate. Its pathway is isoprenoid biosynthesis; isopentenyl diphosphate biosynthesis via DXP pathway; isopentenyl diphosphate from 1-deoxy-D-xylulose 5-phosphate: step 2/6. In terms of biological role, catalyzes the formation of 4-diphosphocytidyl-2-C-methyl-D-erythritol from CTP and 2-C-methyl-D-erythritol 4-phosphate (MEP). This chain is 2-C-methyl-D-erythritol 4-phosphate cytidylyltransferase, found in Xanthomonas campestris pv. campestris (strain B100).